The chain runs to 231 residues: Ion-translocating oxidoreductase complex subunit E (231 aa).

Transmembrane regions (helical) follow at residues 18–38 (ALVQLLGLCPLLAVTSTATNA), 39–59 (LGLGLATTLVLTLTNLTISTL), 63–83 (TPAEIRIPIYVMIIASVVSAV), 86–106 (LINAYAFGLYQSLGIFIPLIV), 125–145 (ALSALDGFSIGMGATCAMFVL), and 182–202 (PFLLAMLPPGAFIGLGLMLAG).

Belongs to the NqrDE/RnfAE family. In terms of assembly, the complex is composed of six subunits: RsxA, RsxB, RsxC, RsxD, RsxE and RsxG.

It localises to the cell inner membrane. Its function is as follows. Part of a membrane-bound complex that couples electron transfer with translocation of ions across the membrane. Required to maintain the reduced state of SoxR. The polypeptide is Ion-translocating oxidoreductase complex subunit E (Escherichia coli O1:K1 / APEC).